The sequence spans 744 residues: TonB-dependent heme receptor A (744 aa).

The N-terminal stretch at 1 to 24 (MNILINKRIFLLVTLVGIQLNVTA) is a signal peptide. One can recognise a TBDR plug domain in the interval 45-157 (DDSNKLPGRS…FAGTVKFETK (113 aa)). One can recognise a TBDR beta-barrel domain in the interval 168–744 (KIGGFLKYGN…NIKFSLSQKF (577 aa)).

Belongs to the TonB-dependent receptor family.

It localises to the cell outer membrane. Functionally, heme receptor. The polypeptide is TonB-dependent heme receptor A (tdhA) (Haemophilus influenzae (strain ATCC 51907 / DSM 11121 / KW20 / Rd)).